Here is a 255-residue protein sequence, read N- to C-terminus: 1-acyl-sn-glycerol-3-phosphate acyltransferase (255 aa).

Positions 78–83 match the HXXXXD motif motif; sequence HVSWLD.

Belongs to the 1-acyl-sn-glycerol-3-phosphate acyltransferase family.

The protein resides in the cell inner membrane. The catalysed reaction is a 1-acyl-sn-glycero-3-phosphate + an acyl-CoA = a 1,2-diacyl-sn-glycero-3-phosphate + CoA. It participates in phospholipid metabolism; CDP-diacylglycerol biosynthesis; CDP-diacylglycerol from sn-glycerol 3-phosphate: step 2/3. Functionally, converts lysophosphatidic acid (LPA) into phosphatidic acid by incorporating acyl moiety at the 2 position. This is 1-acyl-sn-glycerol-3-phosphate acyltransferase (plsC) from Neisseria gonorrhoeae.